The chain runs to 71 residues: High-potential iron-sulfur protein isozyme 2 (71 aa).

Residues Cys34, Cys37, Cys51, and Cys65 each contribute to the [4Fe-4S] cluster site.

Belongs to the high-potential iron-sulfur protein (HiPIP) family. As to quaternary structure, homodimer.

Its function is as follows. Specific class of high-redox-potential 4Fe-4S ferredoxins. Functions in anaerobic electron transport in most purple and in some other photosynthetic bacteria and in at least one genus (Paracoccus) of halophilic, denitrifying bacteria. The protein is High-potential iron-sulfur protein isozyme 2 (hip2) of Ectothiorhodospira shaposhnikovii (Ectothiorhodospira vacuolata).